The following is a 212-amino-acid chain: Thymidylate kinase (212 aa).

ATP is bound at residue 10-17 (GIDGCGKT).

This sequence belongs to the thymidylate kinase family.

The enzyme catalyses dTMP + ATP = dTDP + ADP. Its function is as follows. Phosphorylation of dTMP to form dTDP in both de novo and salvage pathways of dTTP synthesis. This is Thymidylate kinase from Prochlorococcus marinus (strain MIT 9301).